Consider the following 369-residue polypeptide: Glycolate oxidase 5 (369 aa).

The region spanning 1–360 (MGEITNVTEY…TRNHVITEAD (360 aa)) is the FMN hydroxy acid dehydrogenase domain. Tyr-25 contacts glyoxylate. Residues 78–80 (PSA), Ser-107, 128–130 (QLY), and Thr-156 each bind FMN. Glyoxylate is bound at residue Tyr-130. A glyoxylate-binding site is contributed by Arg-165. Positions 231 and 253 each coordinate FMN. Glyoxylate-binding residues include His-255 and Arg-258. The active-site Proton acceptor is the His-255. FMN contacts are provided by residues 286 to 290 (DGGVR) and 309 to 310 (GR). Residues 367 to 369 (SRL) carry the Microbody targeting signal motif.

Belongs to the FMN-dependent alpha-hydroxy acid dehydrogenase family. In terms of assembly, homotetramer. FMN is required as a cofactor.

The protein resides in the peroxisome. It carries out the reaction glycolate + O2 = glyoxylate + H2O2. It functions in the pathway photosynthesis; photorespiration; glycine from 2-phosphoglycolate: step 2/3. Its function is as follows. Catalyzes the oxidation of glycolate to glyoxylate, with a reduction of O2 to H2O2. Is a key enzyme in photorespiration in green plants. This chain is Glycolate oxidase 5 (GLO5), found in Oryza sativa subsp. japonica (Rice).